A 206-amino-acid chain; its full sequence is Orotate phosphoribosyltransferase (206 aa).

Residues Arg-97, Lys-98, Lys-101, and 125–133 contribute to the 5-phospho-alpha-D-ribose 1-diphosphate site; that span reads NDVIASGRS. Orotate is bound at residue Arg-157.

Belongs to the purine/pyrimidine phosphoribosyltransferase family. PyrE subfamily. In terms of assembly, homodimer. Mg(2+) is required as a cofactor.

The catalysed reaction is orotidine 5'-phosphate + diphosphate = orotate + 5-phospho-alpha-D-ribose 1-diphosphate. It functions in the pathway pyrimidine metabolism; UMP biosynthesis via de novo pathway; UMP from orotate: step 1/2. In terms of biological role, catalyzes the transfer of a ribosyl phosphate group from 5-phosphoribose 1-diphosphate to orotate, leading to the formation of orotidine monophosphate (OMP). The sequence is that of Orotate phosphoribosyltransferase from Chlamydia felis (strain Fe/C-56) (Chlamydophila felis).